A 294-amino-acid chain; its full sequence is Eukaryotic translation initiation factor 3 subunit G (294 aa).

2 disordered regions span residues 1–43 and 160–211; these read MPSA…ENKI and EDDG…RDET. A compositionally biased stretch (basic and acidic residues) spans 194 to 211; the sequence is GANRRGETMPSRSQRDET. The 79-residue stretch at 212–290 folds into the RRM domain; it reads ATIRVTNLSE…LILNVEWAKP (79 aa).

This sequence belongs to the eIF-3 subunit G family. Component of the eukaryotic translation initiation factor 3 (eIF-3) complex.

The protein localises to the cytoplasm. RNA-binding component of the eukaryotic translation initiation factor 3 (eIF-3) complex, which is involved in protein synthesis of a specialized repertoire of mRNAs and, together with other initiation factors, stimulates binding of mRNA and methionyl-tRNAi to the 40S ribosome. The eIF-3 complex specifically targets and initiates translation of a subset of mRNAs involved in cell proliferation. This subunit can bind 18S rRNA. The polypeptide is Eukaryotic translation initiation factor 3 subunit G (Nematostella vectensis (Starlet sea anemone)).